A 47-amino-acid chain; its full sequence is Protein YqhI (47 aa).

This is Protein YqhI from Escherichia coli (strain K12).